The sequence spans 388 residues: Succinate--CoA ligase [ADP-forming] subunit beta (388 aa).

One can recognise an ATP-grasp domain in the interval 9 to 244; that stretch reads KQLFARYGLP…QSQEDPREAQ (236 aa). ATP-binding positions include Lys-46, 53–55, Glu-99, Thr-102, and Glu-107; that span reads GRG. Positions 199 and 213 each coordinate Mg(2+). Residues Asn-264 and 321 to 323 each bind substrate; that span reads GIV.

It belongs to the succinate/malate CoA ligase beta subunit family. Heterotetramer of two alpha and two beta subunits. Mg(2+) is required as a cofactor.

It catalyses the reaction succinate + ATP + CoA = succinyl-CoA + ADP + phosphate. The catalysed reaction is GTP + succinate + CoA = succinyl-CoA + GDP + phosphate. It functions in the pathway carbohydrate metabolism; tricarboxylic acid cycle; succinate from succinyl-CoA (ligase route): step 1/1. In terms of biological role, succinyl-CoA synthetase functions in the citric acid cycle (TCA), coupling the hydrolysis of succinyl-CoA to the synthesis of either ATP or GTP and thus represents the only step of substrate-level phosphorylation in the TCA. The beta subunit provides nucleotide specificity of the enzyme and binds the substrate succinate, while the binding sites for coenzyme A and phosphate are found in the alpha subunit. The protein is Succinate--CoA ligase [ADP-forming] subunit beta of Salmonella choleraesuis (strain SC-B67).